We begin with the raw amino-acid sequence, 576 residues long: MAGUK p55 subfamily member 7 (576 aa).

L27 domains lie at 10 to 64 (SEMG…EDCA) and 65 to 122 (PTPV…YDPE). A PDZ domain is found at 139–220 (IIRLVKNKEP…AITFKVVPGI (82 aa)). An SH3 domain is found at 228 to 298 (EPKMFIKALF…PSKHFQERRL (71 aa)). A Guanylate kinase-like domain is found at 368 to 560 (HRLVVLVGPT…AFSELKQALK (193 aa)).

The protein belongs to the MAGUK family.

Its subcellular location is the membrane. It is found in the cell junction. The protein resides in the tight junction. It localises to the adherens junction. Acts as an important adapter that promotes epithelial cell polarity and tight junction formation. Involved in the assembly of protein complexes at sites of cell-cell contact. In Danio rerio (Zebrafish), this protein is MAGUK p55 subfamily member 7 (mpp7).